A 494-amino-acid chain; its full sequence is Lipopolysaccharide core galacturonosyltransferase RgtB (494 aa).

Helical transmembrane passes span 9–29 (ISWI…VRLA), 74–94 (LTAL…LYGL), 104–124 (ALVA…FEMQ), 127–147 (LTHT…FIRS), 156–176 (YLIA…FAIL), 197–217 (WRLG…LFWL), 251–271 (LALA…IVFG), 291–311 (MMLV…AAGI), 316–336 (LVPM…AAGV), and 345–365 (FIPV…GSVA).

This sequence belongs to the glycosyltransferase 83 family.

Its subcellular location is the cell inner membrane. Its pathway is bacterial outer membrane biogenesis; LPS core biosynthesis. Its function is as follows. Involved in the modification of the lipopolysaccharide (LPS) inner core. Catalyzes the transfer of a galacturonic acid (GalA) residue to the 5-position of the outer Kdo (3-deoxy-D-manno-octulosonic acid) residue of the LPS inner core, using dodecaprenyl phosphate-GalA as the donor substrate. Acts after the other GalA transferase RgtA. This chain is Lipopolysaccharide core galacturonosyltransferase RgtB, found in Rhizobium johnstonii (strain DSM 114642 / LMG 32736 / 3841) (Rhizobium leguminosarum bv. viciae).